Here is a 375-residue protein sequence, read N- to C-terminus: Actin, cytoplasmic (375 aa).

This sequence belongs to the actin family.

The protein localises to the cytoplasm. Its subcellular location is the cytoskeleton. It carries out the reaction ATP + H2O = ADP + phosphate + H(+). Functionally, actins are highly conserved proteins that are involved in various types of cell motility and are ubiquitously expressed in all eukaryotic cells. The sequence is that of Actin, cytoplasmic from Oxytricha trifallax (Sterkiella histriomuscorum).